We begin with the raw amino-acid sequence, 1060 residues long: Bumetanide-sensitive sodium-(potassium)-chloride cotransporter (1060 aa).

Residues 1 to 122 (MNDENRFNVS…KSPTPAVGIK (122 aa)) lie on the Cytoplasmic side of the membrane. Helical transmembrane passes span 123–143 (LGWI…VMLF) and 154–174 (GIGL…ITTL). The Cytoplasmic portion of the chain corresponds to 175 to 197 (SMSAICTNGEVKGGGIYYIISRS). The next 2 helical transmembrane spans lie at 198-218 (LGPE…AVAA) and 250-270 (IVGT…MDWE). The Cytoplasmic portion of the chain corresponds to 271-275 (SKAQN). 2 helical membrane passes run 276-296 (FLIA…IMGP) and 332-352 (FFSV…GANI). The Cytoplasmic portion of the chain corresponds to 353 to 367 (SGDLKDPASAIPKGT). A helical membrane pass occupies residues 368–388 (LLALLISMVSYTLMVLFAGGG). 3 N-linked (GlcNAc...) asparagine glycosylation sites follow: Asn396, Asn404, and Asn419. The chain crosses the membrane as a helical span at residues 432 to 452 (VMQLMSAWGPFIYGGCWAATL). The Cytoplasmic portion of the chain corresponds to 453–497 (STALTNLLSVPRLIQALGVDRIYPGLIFFSKPYGRHGEPYRGYVL). 2 helical membrane-spanning segments follow: residues 498–518 (TFFV…APLI) and 563–583 (CVAI…AIFF). At 584–642 (TLYLIVHYRRPDVNWGSSTQAQMYKTALSSAHALARTGEHVKNYWPQLLVLAGRPQARP) the chain is on the cytoplasmic side. A helical membrane pass occupies residues 643–663 (ALVDLGNLISKAGSLMIVGDI). An N-linked (GlcNAc...) asparagine glycan is attached at Asn816. The chain crosses the membrane as a helical span at residues 882–902 (TLDVWWLYDDGGLTILLPYII). Residues 903-1060 (SQRSAWANCK…NHTSVLTFYS (158 aa)) lie on the Cytoplasmic side of the membrane.

It belongs to the SLC12A transporter family.

Its subcellular location is the membrane. Electrically silent transporter system. Mediates sodium and chloride reabsorption. Plays a vital role in the regulation of ionic balance and cell volume. The polypeptide is Bumetanide-sensitive sodium-(potassium)-chloride cotransporter (Manduca sexta (Tobacco hawkmoth)).